We begin with the raw amino-acid sequence, 142 residues long: MLNEFKTFISKGNVMDMAVGIIIGAAFTAIVSSLVADLVNPFIALFTGGIDFSGWFYALDGETYASLAAATDAGAPVFAFGNFIMAVINFLIIAFVVFMLVKTVNRIKDAAEGEKEAVAEEPAGPTELDILKEIRDALAKQG.

3 helical membrane-spanning segments follow: residues 19-39 (VGII…ADLV), 41-61 (PFIA…ALDG), and 78-98 (FAFG…FVVF).

The protein belongs to the MscL family. Homopentamer.

The protein localises to the cell inner membrane. Its function is as follows. Channel that opens in response to stretch forces in the membrane lipid bilayer. May participate in the regulation of osmotic pressure changes within the cell. The protein is Large-conductance mechanosensitive channel of Roseobacter denitrificans (strain ATCC 33942 / OCh 114) (Erythrobacter sp. (strain OCh 114)).